A 302-amino-acid polypeptide reads, in one-letter code: Putative S-adenosyl-L-methionine-dependent methyltransferase MAV_2803 (302 aa).

Residues Asp-129 and Asp-158–Leu-159 contribute to the S-adenosyl-L-methionine site.

Belongs to the UPF0677 family.

Exhibits S-adenosyl-L-methionine-dependent methyltransferase activity. The protein is Putative S-adenosyl-L-methionine-dependent methyltransferase MAV_2803 of Mycobacterium avium (strain 104).